The sequence spans 671 residues: Major S-layer protein (671 aa).

The first 24 residues, 1–24, serve as a signal peptide directing secretion; the sequence is MKRFAALSLAALMLLTVFASAASA. N-linked (GlcNAc...) asparagine glycans are attached at residues Asn-36, Asn-70, Asn-116, and Asn-350. Positions 594–650 are disordered; that stretch reads GEEVSGEEETPEETPTGEVTETEGEEETPTEVTETPTEGEPAPEETETTESEGTTPG. Positions 613-622 are enriched in acidic residues; the sequence is TETEGEEETP. Low complexity predominate over residues 623–633; sequence TEVTETPTEGE. A compositionally biased stretch (acidic residues) spans 634–643; that stretch reads PAPEETETTE. A helical membrane pass occupies residues 647 to 667; that stretch reads TTPGFGFMFGLVGLLAVVYLV.

Belongs to the Methanosarcinales S-layer protein family. Glycosylated.

The protein resides in the secreted. It is found in the cell wall. The protein localises to the S-layer. Its subcellular location is the cell membrane. In terms of biological role, S-layer protein. The S-layer is a paracrystalline mono-layered assembly of proteins which coat the surface of the cell. The chain is Major S-layer protein from Methanosarcina acetivorans (strain ATCC 35395 / DSM 2834 / JCM 12185 / C2A).